The following is a 139-amino-acid chain: Peptide methionine sulfoxide reductase B5 (139 aa).

An N-acetylalanine modification is found at alanine 2. One can recognise a MsrB domain in the interval 12-133 (EEEWRAVLSP…NSVSISFNPA (122 aa)). Zn(2+)-binding residues include cysteine 51, cysteine 54, cysteine 97, and cysteine 100. A disulfide bridge connects residues cysteine 69 and cysteine 122. Cysteine 122 serves as the catalytic Nucleophile.

The protein belongs to the MsrB Met sulfoxide reductase family. Zn(2+) is required as a cofactor.

The protein localises to the cytoplasm. It localises to the cytosol. It carries out the reaction L-methionyl-[protein] + [thioredoxin]-disulfide + H2O = L-methionyl-(R)-S-oxide-[protein] + [thioredoxin]-dithiol. Catalyzes the reduction of methionine sulfoxide (MetSO) to methionine in proteins. Plays a protective role against oxidative stress by restoring activity to proteins that have been inactivated by methionine oxidation. MSRB family specifically reduces the MetSO R-enantiomer. The sequence is that of Peptide methionine sulfoxide reductase B5 (MSRB5) from Arabidopsis thaliana (Mouse-ear cress).